Here is a 235-residue protein sequence, read N- to C-terminus: Large ribosomal subunit protein uL1 (235 aa).

This sequence belongs to the universal ribosomal protein uL1 family. Part of the 50S ribosomal subunit.

Binds directly to 23S rRNA. The L1 stalk is quite mobile in the ribosome, and is involved in E site tRNA release. Functionally, protein L1 is also a translational repressor protein, it controls the translation of the L11 operon by binding to its mRNA. This is Large ribosomal subunit protein uL1 from Methylobacterium nodulans (strain LMG 21967 / CNCM I-2342 / ORS 2060).